A 167-amino-acid chain; its full sequence is uncharacterized protein (167 aa).

The helical transmembrane segment at 4-24 (IIGLFFIIILIVINISILAYD) threads the bilayer.

It is found in the membrane. This is an uncharacterized protein from Rickettsia prowazekii (strain Madrid E).